The chain runs to 763 residues: Phosphoglycerol transferase I (763 aa).

4 helical membrane-spanning segments follow: residues 4–19 (LLSF…IYAW), 26–48 (WWFA…LFAS), 76–98 (YILP…GWIL), and 105–127 (PHHF…ASPA).

Belongs to the OpgB family.

The protein localises to the cell inner membrane. The enzyme catalyses a phosphatidylglycerol + a membrane-derived-oligosaccharide D-glucose = a 1,2-diacyl-sn-glycerol + a membrane-derived-oligosaccharide 6-(glycerophospho)-D-glucose.. It functions in the pathway glycan metabolism; osmoregulated periplasmic glucan (OPG) biosynthesis. In terms of biological role, transfers a phosphoglycerol residue from phosphatidylglycerol to the membrane-bound nascent glucan backbones. The polypeptide is Phosphoglycerol transferase I (Escherichia coli O157:H7).